A 495-amino-acid chain; its full sequence is Potassium voltage-gated channel subfamily A member 1 (495 aa).

Residues 1–30 (MTVMSGENVDEASAAPGHPQDGSYPRQADH) form a disordered region. The tetramerization domain stretch occupies residues 1–128 (MTVMSGENVD…FYELGEEAME (128 aa)). Residues 1–164 (MTVMSGENVD…LLFEYPESSG (164 aa)) are Cytoplasmic-facing. Ser-23 bears the Phosphoserine mark. A helical membrane pass occupies residues 165–186 (PARVIAIVSVMVILISIVIFCL). Over 187–220 (ETLPELKDDKDFTGTVHRIDNTTVIYNSNIFTDP) the chain is Extracellular. A glycan (N-linked (GlcNAc...) asparagine) is linked at Asn-207. Residues 221 to 242 (FFIVETLCIIWFSFELVVRFFA) form a helical membrane-spanning segment. A lipid anchor (S-palmitoyl cysteine) is attached at Cys-243. Topologically, residues 243-253 (CPSKTDFFKNI) are cytoplasmic. Residues 254–274 (MNFIDIVAIIPYFITLGTEIA) traverse the membrane as a helical segment. Residues 275-287 (EQEGNQKGEQATS) lie on the Extracellular side of the membrane. A helical; Voltage-sensor membrane pass occupies residues 288 to 308 (LAILRVIRLVRVFRIFKLSRH). Topologically, residues 309 to 323 (SKGLQILGQTLKASM) are cytoplasmic. The segment at 310–323 (KGLQILGQTLKASM) is S4-S5 linker. Ser-322 carries the phosphoserine; by PKA modification. The chain crosses the membrane as a helical span at residues 324–345 (RELGLLIFFLFIGVILFSSAVY). Residues 346–359 (FAEAEEAESHFSSI) are Extracellular-facing. Residues 360-371 (PDAFWWAVVSMT) constitute an intramembrane region (helical). Residues 372–377 (TVGYGD) carry the Selectivity filter motif. An intramembrane segment occupies 372 to 379 (TVGYGDMY). Residues 380 to 386 (PVTIGGK) lie on the Extracellular side of the membrane. The helical transmembrane segment at 387 to 415 (IVGSLCAIAGVLTIALPVPVIVSNFNYFY) threads the bilayer. Residues 416 to 495 (HRETEGEEQA…VNKSKLLTDV (80 aa)) are Cytoplasmic-facing. Residues Ser-437 and Ser-439 each carry the phosphoserine modification. At Ser-446 the chain carries Phosphoserine; by PKA. The PDZ-binding motif lies at 493–495 (TDV).

It belongs to the potassium channel family. A (Shaker) (TC 1.A.1.2) subfamily. Kv1.1/KCNA1 sub-subfamily. In terms of assembly, homotetramer and heterotetramer with other channel-forming alpha subunits, such as KCNA2, KCNA4, KCNA5, KCNA6 and KCNA7. Channel activity is regulated by interaction with the beta subunits KCNAB1 and KCNAB2. Identified in a complex with KCNA2 and KCNAB2. Interacts (via C-terminus) with the PDZ domains of DLG1, DLG2 and DLG4. Interacts with LGI1 within a complex containing LGI1, KCNA4 and KCNAB1. Interacts (via N-terminus) with STX1A; this promotes channel inactivation. Interacts (via N-terminus) with the heterodimer formed by GNB1 and GNG2; this promotes channel inactivation. Can interact simultaneously with STX1A and the heterodimer formed by GNB1 and GNG2. Interacts (via cytoplasmic N-terminal domain) with KCNRG; this inhibits channel activity. Interacts with ANK3; this inhibits channel activity. Interacts with ADAM11. In terms of processing, N-glycosylated. Post-translationally, palmitoylated on Cys-243; which may be required for membrane targeting. Phosphorylated on tyrosine residues. Phosphorylation increases in response to NRG1; this inhibits channel activity. Phosphorylation at Ser-446 regulates channel activity by down-regulating expression at the cell membrane. As to expression, detected adjacent to nodes of Ranvier in juxtaparanodal zones in spinal cord nerve fibers, but also in paranodal regions in some myelinated spinal cord axons (at protein level). Detected in the islet of Langerhans.

The protein resides in the cell membrane. The protein localises to the membrane. It is found in the cell projection. Its subcellular location is the axon. It localises to the cytoplasmic vesicle. The protein resides in the perikaryon. The protein localises to the endoplasmic reticulum. It is found in the dendrite. Its subcellular location is the cell junction. It localises to the synapse. The protein resides in the presynaptic cell membrane. The protein localises to the presynapse. The enzyme catalyses K(+)(in) = K(+)(out). Inhibited by 1.1 mM 4-aminopyridine (4-AP) and by 20 mM tetraethylammonium (TEA), but not by charybdotoxin (CTX). Inhibited by dendrotoxin (DTX). In terms of biological role, voltage-gated potassium channel that mediates transmembrane potassium transport in excitable membranes, primarily in the brain and the central nervous system, but also in the kidney. Contributes to the regulation of the membrane potential and nerve signaling, and prevents neuronal hyperexcitability. Forms tetrameric potassium-selective channels through which potassium ions pass in accordance with their electrochemical gradient. The channel alternates between opened and closed conformations in response to the voltage difference across the membrane. Can form functional homotetrameric channels and heterotetrameric channels that contain variable proportions of KCNA1, KCNA2, KCNA4, KCNA5, KCNA6, KCNA7, and possibly other family members as well; channel properties depend on the type of alpha subunits that are part of the channel. Channel properties are modulated by cytoplasmic beta subunits that regulate the subcellular location of the alpha subunits and promote rapid inactivation of delayed rectifier potassium channels. In vivo, membranes probably contain a mixture of heteromeric potassium channel complexes, making it difficult to assign currents observed in intact tissues to any particular potassium channel family member. Homotetrameric KCNA1 forms a delayed-rectifier potassium channel that opens in response to membrane depolarization, followed by slow spontaneous channel closure. In contrast, a heterotetrameric channel formed by KCNA1 and KCNA4 shows rapid inactivation. Regulates neuronal excitability in hippocampus, especially in mossy fibers and medial perforant path axons, preventing neuronal hyperexcitability. Response to toxins that are selective for KCNA1, respectively for KCNA2, suggests that heteromeric potassium channels composed of both KCNA1 and KCNA2 play a role in pacemaking and regulate the output of deep cerebellar nuclear neurons. May function as down-stream effector for G protein-coupled receptors and inhibit GABAergic inputs to basolateral amygdala neurons. May contribute to the regulation of neurotransmitter release, such as gamma-aminobutyric acid (GABA) release. Plays a role in regulating the generation of action potentials and preventing hyperexcitability in myelinated axons of the vagus nerve, and thereby contributes to the regulation of heart contraction. Required for normal neuromuscular responses. Regulates the frequency of neuronal action potential firing in response to mechanical stimuli, and plays a role in the perception of pain caused by mechanical stimuli, but does not play a role in the perception of pain due to heat stimuli. Required for normal responses to auditory stimuli and precise location of sound sources, but not for sound perception. The use of toxins that block specific channels suggest that it contributes to the regulation of the axonal release of the neurotransmitter dopamine. Required for normal postnatal brain development and normal proliferation of neuronal precursor cells in the brain. Plays a role in the reabsorption of Mg(2+) in the distal convoluted tubules in the kidney and in magnesium ion homeostasis, probably via its effect on the membrane potential. In Homo sapiens (Human), this protein is Potassium voltage-gated channel subfamily A member 1.